The sequence spans 389 residues: Chorismate synthase (389 aa).

The NADP(+) site is built by Arg39 and Arg45. FMN-binding positions include 130 to 132, 251 to 252, Gly296, 311 to 315, and Arg338; these read RSS, NA, and KPIPT.

This sequence belongs to the chorismate synthase family. Homotetramer. FMNH2 serves as cofactor.

The enzyme catalyses 5-O-(1-carboxyvinyl)-3-phosphoshikimate = chorismate + phosphate. It participates in metabolic intermediate biosynthesis; chorismate biosynthesis; chorismate from D-erythrose 4-phosphate and phosphoenolpyruvate: step 7/7. In terms of biological role, catalyzes the anti-1,4-elimination of the C-3 phosphate and the C-6 proR hydrogen from 5-enolpyruvylshikimate-3-phosphate (EPSP) to yield chorismate, which is the branch point compound that serves as the starting substrate for the three terminal pathways of aromatic amino acid biosynthesis. This reaction introduces a second double bond into the aromatic ring system. This is Chorismate synthase from Oceanobacillus iheyensis (strain DSM 14371 / CIP 107618 / JCM 11309 / KCTC 3954 / HTE831).